A 312-amino-acid chain; its full sequence is D-alanine--D-alanine ligase (312 aa).

The ATP-grasp domain occupies 103-303; sequence KQQLVPHGIR…YADLVQAIVD (201 aa). An ATP-binding site is contributed by 130-186; it reads MPRPYVLKPVNEGSSVGVAIIKERDNHGVPIHRDSHGPWQTFATLLAEPFIRGRELT. 3 residues coordinate Mg(2+): Asp254, Glu270, and Asn272.

The protein belongs to the D-alanine--D-alanine ligase family. Mg(2+) is required as a cofactor. Requires Mn(2+) as cofactor.

Its subcellular location is the cytoplasm. It catalyses the reaction 2 D-alanine + ATP = D-alanyl-D-alanine + ADP + phosphate + H(+). Its pathway is cell wall biogenesis; peptidoglycan biosynthesis. Functionally, cell wall formation. The protein is D-alanine--D-alanine ligase of Rhizorhabdus wittichii (strain DSM 6014 / CCUG 31198 / JCM 15750 / NBRC 105917 / EY 4224 / RW1) (Sphingomonas wittichii).